A 417-amino-acid polypeptide reads, in one-letter code: Probable uracil permease (417 aa).

At 1 to 13 (MTNQNPPVLLEQN) the chain is on the cytoplasmic side. A helical transmembrane segment spans residues 14–37 (HAKQAFVGLQMLFVAFGALVLVPL). At 38 to 41 (ITGL) the chain is on the periplasmic side. A helical membrane pass occupies residues 42–61 (NANTALLTAGIGTLLFQLCT). Topologically, residues 62 to 64 (GRQ) are cytoplasmic. Residues 65-81 (VPIFLASSFAFIAPIQY) form a discontinuously helical membrane-spanning segment. Phe73 provides a ligand contact to uracil. The Periplasmic segment spans residues 83–90 (VTTWGIAT). A helical transmembrane segment spans residues 91-111 (TMGGLVFTGLVYFALSTLVKI). At 112-123 (KGAGALQKVFPP) the chain is on the cytoplasmic side. A helical membrane pass occupies residues 124–145 (VVVGPVIIIIGMGLAPVAVDMA). The Periplasmic segment spans residues 146–154 (LGKNSTYQY). Residues 155–170 (NDAVFVSMATLLTTLG) traverse the membrane as a helical segment. At 171-177 (VAVFAKG) the chain is on the cytoplasmic side. Residues 178–198 (MMKLIPIMFGIVVGYILCLFL) traverse the membrane as a helical segment. Topologically, residues 199–223 (GLINFQPVIDAPWFSVPEITTPEFK) are periplasmic. Residues 224–247 (LEAILYLLPIAIAPAVEHVGGIMA) form a helical membrane-spanning segment. Glu240 contacts uracil. Over 248–260 (ISSVTGKDFLQKP) the chain is Cytoplasmic. The chain crosses the membrane as a helical span at residues 261-280 (GLHRTLLGDGIATSAASFLG). The discontinuously helical transmembrane segment at 281–297 (GPPNTTYAEVTGAVMLT) threads the bilayer. Uracil is bound at residue Glu289. Topologically, residues 298 to 300 (RNF) are cytoplasmic. Residues 301 to 318 (NPKIMTWAAVWAIAISFC) traverse the membrane as a helical segment. Over 319 to 331 (GKVGAFLSTIPTI) the chain is Periplasmic. Residues 332 to 353 (VMGGIMMLVFGSIAVVGMSTLI) traverse the membrane as a helical segment. At 354–364 (RGKVDVTEARN) the chain is on the cytoplasmic side. An intramembrane region (discontinuously helical) is located at residues 365–400 (LCIISVVMTFGIGGMFVNFGEVSLKGISLCAVVAIL). The Cytoplasmic segment spans residues 401 to 416 (LNLILPKAKNTPIEEN).

Belongs to the nucleobase:cation symporter-2 (NCS2) (TC 2.A.40) family.

The protein resides in the cell inner membrane. The enzyme catalyses uracil(in) + H(+)(in) = uracil(out) + H(+)(out). In terms of biological role, transport of uracil in the cell. This chain is Probable uracil permease (uraA), found in Pasteurella multocida (strain Pm70).